Here is a 135-residue protein sequence, read N- to C-terminus: uncharacterized protein (135 aa).

An HTH merR-type domain is found at 2-71; sequence TYTTAKAAEK…LKDIKRFAEC (70 aa). A DNA-binding region (H-T-H motif) is located at residues 5-24; sequence TAKAAEKIGISAYTLRFYDK.

This is an uncharacterized protein from Haemophilus influenzae (strain ATCC 51907 / DSM 11121 / KW20 / Rd).